Consider the following 955-residue polypeptide: uncharacterized protein (955 aa).

An Importin N-terminal domain is found at A23–A90.

This is an uncharacterized protein from Schizosaccharomyces pombe (strain 972 / ATCC 24843) (Fission yeast).